The following is a 237-amino-acid chain: MARKPGKQYQAAQKQVESKEYQLEEAIPLIKKIKFAKFDETVEVHMRLGVDPKHADQMVRGTVLMPNGLGKSKKVLVIASGDKQREATEAGADFVGGEDMVNKIQSESWTDYDAVIATPDMMRSVGKLGKVLGPRGLMPNPKTGTVTVDVAKAIAEIKAGKVEFRVDKTGIIHAPVGKISFSADKLVENASSLIAAVIKAKPAVAKGKYVRSATVCSTMGPGVAIDTAPFSVKAAAV.

Belongs to the universal ribosomal protein uL1 family. Part of the 50S ribosomal subunit.

Its function is as follows. Binds directly to 23S rRNA. The L1 stalk is quite mobile in the ribosome, and is involved in E site tRNA release. Functionally, protein L1 is also a translational repressor protein, it controls the translation of the L11 operon by binding to its mRNA. The protein is Large ribosomal subunit protein uL1 of Solibacter usitatus (strain Ellin6076).